The primary structure comprises 309 residues: Syndecan-1 (309 aa).

Positions methionine 1 to proline 22 are cleaved as a signal peptide. Over glutamine 23–glycine 253 the chain is Extracellular. Disordered regions lie at residues asparagine 28–leucine 57 and threonine 145–serine 185. The span at glutamate 32–aspartate 42 shows a compositional bias: acidic residues. An O-linked (Xyl...) (chondroitin sulfate) serine glycan is attached at serine 37. N-linked (GlcNAc...) asparagine glycosylation is present at asparagine 43. Serine 45 and serine 47 each carry an O-linked (Xyl...) (heparan sulfate) serine glycan. Positions glycine 173–glycine 183 are enriched in low complexity. 2 O-linked (Xyl...) (chondroitin sulfate) serine glycosylation sites follow: serine 205 and serine 215. A helical membrane pass occupies residues glycine 254–leucine 274. At tyrosine 275–alanine 309 the chain is on the cytoplasmic side. The disordered stretch occupies residues glycine 283–alanine 309. Serine 284 carries the phosphoserine modification.

This sequence belongs to the syndecan proteoglycan family. In terms of assembly, interacts with CDCP1. Interacts (via C-terminus) with TIAM1 (via PDZ domain). Interacts with MDK. Shedding is enhanced by a number of factors such as heparanase, thrombin or EGF. Also by stress and wound healing. PMA-mediated shedding is inhibited by TIMP3.

It is found in the membrane. The protein localises to the secreted. It localises to the extracellular exosome. Functionally, cell surface proteoglycan that contains both heparan sulfate and chondroitin sulfate and that links the cytoskeleton to the interstitial matrix. Regulates exosome biogenesis in concert with SDCBP and PDCD6IP. Able to induce its own expression in dental mesenchymal cells and also in the neighboring dental epithelial cells via an MSX1-mediated pathway. The sequence is that of Syndecan-1 from Mesocricetus auratus (Golden hamster).